The primary structure comprises 262 residues: Small ribosomal subunit protein uS2 (262 aa).

The interval 228-262 is disordered; it reads VSNEEVAAEQNINLDDKEESEQAETTEENTSVESN. Residues 243–254 are compositionally biased toward acidic residues; that stretch reads DKEESEQAETTE.

This sequence belongs to the universal ribosomal protein uS2 family.

This Staphylococcus epidermidis (strain ATCC 35984 / DSM 28319 / BCRC 17069 / CCUG 31568 / BM 3577 / RP62A) protein is Small ribosomal subunit protein uS2.